An 889-amino-acid chain; its full sequence is DNA gyrase subunit A (889 aa).

A Topo IIA-type catalytic domain is found at 35–501 (LPDVRDGLKP…GFEDLEDEDL (467 aa)). Tyrosine 123 (O-(5'-phospho-DNA)-tyrosine intermediate) is an active-site residue. The GyrA-box signature appears at 528 to 534 (QNRGGRG). The tract at residues 810-889 (VKEDAEDETN…IQQSSDEDEE (80 aa)) is disordered. Residues 813 to 823 (DAEDETNEDEQ) are compositionally biased toward acidic residues. The segment covering 863 to 875 (DGRIEVRQDFMDR) has biased composition (basic and acidic residues). Residues 876-889 (VEEDIQQSSDEDEE) show a composition bias toward acidic residues.

The protein belongs to the type II topoisomerase GyrA/ParC subunit family. Heterotetramer, composed of two GyrA and two GyrB chains. In the heterotetramer, GyrA contains the active site tyrosine that forms a transient covalent intermediate with DNA, while GyrB binds cofactors and catalyzes ATP hydrolysis.

The protein localises to the cytoplasm. The enzyme catalyses ATP-dependent breakage, passage and rejoining of double-stranded DNA.. Its function is as follows. A type II topoisomerase that negatively supercoils closed circular double-stranded (ds) DNA in an ATP-dependent manner to modulate DNA topology and maintain chromosomes in an underwound state. Negative supercoiling favors strand separation, and DNA replication, transcription, recombination and repair, all of which involve strand separation. Also able to catalyze the interconversion of other topological isomers of dsDNA rings, including catenanes and knotted rings. Type II topoisomerases break and join 2 DNA strands simultaneously in an ATP-dependent manner. This Staphylococcus aureus (strain N315) protein is DNA gyrase subunit A.